The chain runs to 247 residues: Ubiquinone biosynthesis O-methyltransferase (247 aa).

S-adenosyl-L-methionine contacts are provided by Arg-39, Gly-70, Asp-91, and Met-134.

It belongs to the methyltransferase superfamily. UbiG/COQ3 family.

It catalyses the reaction a 3-demethylubiquinol + S-adenosyl-L-methionine = a ubiquinol + S-adenosyl-L-homocysteine + H(+). The catalysed reaction is a 3-(all-trans-polyprenyl)benzene-1,2-diol + S-adenosyl-L-methionine = a 2-methoxy-6-(all-trans-polyprenyl)phenol + S-adenosyl-L-homocysteine + H(+). It participates in cofactor biosynthesis; ubiquinone biosynthesis. Its function is as follows. O-methyltransferase that catalyzes the 2 O-methylation steps in the ubiquinone biosynthetic pathway. The polypeptide is Ubiquinone biosynthesis O-methyltransferase (Cereibacter sphaeroides (strain ATCC 17029 / ATH 2.4.9) (Rhodobacter sphaeroides)).